The following is a 187-amino-acid chain: Adenine phosphoribosyltransferase (187 aa).

Residue 133–137 (ATGGS) participates in AMP binding.

It belongs to the purine/pyrimidine phosphoribosyltransferase family. Homodimer. Mg(2+) is required as a cofactor.

The protein localises to the cytoplasm. It localises to the nucleus. It carries out the reaction AMP + diphosphate = 5-phospho-alpha-D-ribose 1-diphosphate + adenine. Its pathway is purine metabolism; AMP biosynthesis via salvage pathway; AMP from adenine: step 1/1. Functionally, catalyzes a salvage reaction resulting in the formation of AMP, that is energically less costly than de novo synthesis. The protein is Adenine phosphoribosyltransferase (APT1) of Eremothecium gossypii (strain ATCC 10895 / CBS 109.51 / FGSC 9923 / NRRL Y-1056) (Yeast).